Reading from the N-terminus, the 90-residue chain is Putative membrane protein insertion efficiency factor (90 aa).

Belongs to the UPF0161 family.

It localises to the cell inner membrane. Could be involved in insertion of integral membrane proteins into the membrane. In Bordetella bronchiseptica (strain ATCC BAA-588 / NCTC 13252 / RB50) (Alcaligenes bronchisepticus), this protein is Putative membrane protein insertion efficiency factor.